Consider the following 354-residue polypeptide: MEISASMVKELRESTGAGMMDCKKALQESNGDMQKAVDILREKGLGKAAKKADRLASEGLVSVVVSENNKTATITEINSETDFVAKNATFVDLVKNTTIHVQTNSINTVEELKESSINGVKFEEYFQSQIATIGENLVVRRFETIKAAKGGIVAGYIHSNSRVGVLIGAACDSEETAAKIHDFLRNLCMHAAAMKPQVISYKEFDADFVEKEYLALKGELEKENEELVRLKKPLHKIPEFASRAQLTDDIIAKATENLKAELKKQGKPEAIWDKILPGQIDRYIADNTQLDQRLTLLGQFYVMDDKKTVEQAIADEAKKVGGKVEIVSYVRFEVGEGLEKKSEDFAAEVAAQMA.

The segment at 81–84 is involved in Mg(2+) ion dislocation from EF-Tu; sequence TDFV.

The protein belongs to the EF-Ts family.

Its subcellular location is the cytoplasm. In terms of biological role, associates with the EF-Tu.GDP complex and induces the exchange of GDP to GTP. It remains bound to the aminoacyl-tRNA.EF-Tu.GTP complex up to the GTP hydrolysis stage on the ribosome. In Campylobacter fetus subsp. fetus (strain 82-40), this protein is Elongation factor Ts.